Here is a 200-residue protein sequence, read N- to C-terminus: Nucleoside triphosphate pyrophosphatase (200 aa).

Asp-79 (proton acceptor) is an active-site residue.

Belongs to the Maf family. A divalent metal cation is required as a cofactor.

It is found in the cytoplasm. The catalysed reaction is a ribonucleoside 5'-triphosphate + H2O = a ribonucleoside 5'-phosphate + diphosphate + H(+). The enzyme catalyses a 2'-deoxyribonucleoside 5'-triphosphate + H2O = a 2'-deoxyribonucleoside 5'-phosphate + diphosphate + H(+). Its function is as follows. Nucleoside triphosphate pyrophosphatase. May have a dual role in cell division arrest and in preventing the incorporation of modified nucleotides into cellular nucleic acids. The chain is Nucleoside triphosphate pyrophosphatase from Legionella pneumophila (strain Paris).